Consider the following 237-residue polypeptide: Uridylate kinase (237 aa).

ATP is bound at residue 12–15 (KLSG). An involved in allosteric activation by GTP region spans residues 20–25 (GENGYG). Gly-54 is a UMP binding site. Residues Gly-55 and Arg-59 each coordinate ATP. UMP is bound by residues Asp-72 and 133–140 (TGNPYFST). Positions 166 and 169 each coordinate ATP.

The protein belongs to the UMP kinase family. Homohexamer.

It localises to the cytoplasm. The enzyme catalyses UMP + ATP = UDP + ADP. It functions in the pathway pyrimidine metabolism; CTP biosynthesis via de novo pathway; UDP from UMP (UMPK route): step 1/1. Its activity is regulated as follows. Allosterically activated by GTP. Inhibited by UTP. Its function is as follows. Catalyzes the reversible phosphorylation of UMP to UDP. In Clostridium tetani (strain Massachusetts / E88), this protein is Uridylate kinase.